Consider the following 219-residue polypeptide: 2-C-methyl-D-erythritol 4-phosphate cytidylyltransferase (219 aa).

This sequence belongs to the IspD/TarI cytidylyltransferase family. IspD subfamily.

The enzyme catalyses 2-C-methyl-D-erythritol 4-phosphate + CTP + H(+) = 4-CDP-2-C-methyl-D-erythritol + diphosphate. The protein operates within isoprenoid biosynthesis; isopentenyl diphosphate biosynthesis via DXP pathway; isopentenyl diphosphate from 1-deoxy-D-xylulose 5-phosphate: step 2/6. Catalyzes the formation of 4-diphosphocytidyl-2-C-methyl-D-erythritol from CTP and 2-C-methyl-D-erythritol 4-phosphate (MEP). This chain is 2-C-methyl-D-erythritol 4-phosphate cytidylyltransferase, found in Chlamydia trachomatis serovar D (strain ATCC VR-885 / DSM 19411 / UW-3/Cx).